The sequence spans 84 residues: Molybdopterin synthase sulfur carrier subunit (84 aa).

1-thioglycine; alternate is present on Gly84. Residue Gly84 is modified to Glycyl adenylate; alternate.

Belongs to the MoaD family. MOCS2A subfamily. Heterotetramer; composed of 2 small (MOCS2A) and 2 large (MOCS2B) subunits. Post-translationally, C-terminal thiocarboxylation occurs in 2 steps, it is first acyl-adenylated (-COAMP) via the hesA/moeB/thiF part of MOCS3, then thiocarboxylated (-COSH) via the rhodanese domain of MOCS3.

It is found in the cytoplasm. Its pathway is cofactor biosynthesis; molybdopterin biosynthesis. Acts as a sulfur carrier required for molybdopterin biosynthesis. Component of the molybdopterin synthase complex that catalyzes the conversion of precursor Z into molybdopterin by mediating the incorporation of 2 sulfur atoms into precursor Z to generate a dithiolene group. In the complex, serves as sulfur donor by being thiocarboxylated (-COSH) at its C-terminus by MOCS3. After interaction with MOCS2B, the sulfur is then transferred to precursor Z to form molybdopterin. The chain is Molybdopterin synthase sulfur carrier subunit from Caenorhabditis briggsae.